Consider the following 106-residue polypeptide: Minor capsid protein VP2 (106 aa).

The protein belongs to the vesivirus VP2 protein family. As to quaternary structure, homooligomer. The portal-like structure consists in 12 copies of VP2. Interacts with capsid protein VP1.

Its subcellular location is the virion. The protein resides in the host cytoplasm. Minor structural protein that forms a portal-like structure at a unique three-fold axis of symmetry, following binding to the host receptor. The virion attaches to feline junctional adhesion molecule A (F11R). Once attached, the virion is endocytosed. Acidification of the endosome induces conformational change of capsid protein thereby injecting virus genomic RNA into host cytoplasm. The channel formed by VP2 may allow the delivery of the viral genome through the host endosomal membrane. This is Minor capsid protein VP2 from Feline calicivirus (strain Japanese F4) (FCV).